The sequence spans 397 residues: 1-deoxy-D-xylulose 5-phosphate reductoisomerase (397 aa).

NADPH-binding residues include threonine 17, glycine 18, serine 19, isoleucine 20, asparagine 47, and asparagine 130. 1-deoxy-D-xylulose 5-phosphate is bound at residue lysine 131. Glutamate 132 contributes to the NADPH binding site. Aspartate 156 contacts Mn(2+). 1-deoxy-D-xylulose 5-phosphate contacts are provided by serine 157, glutamate 158, serine 182, and histidine 205. Glutamate 158 is a Mn(2+) binding site. NADPH is bound at residue glycine 211. The 1-deoxy-D-xylulose 5-phosphate site is built by serine 218, asparagine 223, lysine 224, and glutamate 227. Glutamate 227 is a binding site for Mn(2+).

This sequence belongs to the DXR family. Requires Mg(2+) as cofactor. Mn(2+) serves as cofactor.

The enzyme catalyses 2-C-methyl-D-erythritol 4-phosphate + NADP(+) = 1-deoxy-D-xylulose 5-phosphate + NADPH + H(+). The protein operates within isoprenoid biosynthesis; isopentenyl diphosphate biosynthesis via DXP pathway; isopentenyl diphosphate from 1-deoxy-D-xylulose 5-phosphate: step 1/6. Catalyzes the NADPH-dependent rearrangement and reduction of 1-deoxy-D-xylulose-5-phosphate (DXP) to 2-C-methyl-D-erythritol 4-phosphate (MEP). The protein is 1-deoxy-D-xylulose 5-phosphate reductoisomerase of Allorhizobium ampelinum (strain ATCC BAA-846 / DSM 112012 / S4) (Agrobacterium vitis (strain S4)).